Reading from the N-terminus, the 746-residue chain is Lysine-specific histone demethylase 1 homolog 2 (746 aa).

A disordered region spans residues 1 to 26 (MNSPASDETAPRRNRRKVSRKNYDEN). The SWIRM domain occupies 51–152 (EKETETEALI…FGVSPLFAPY (102 aa)). Residues Glu189, Arg191, Arg197, and Glu569 each coordinate FAD.

This sequence belongs to the flavin monoamine oxidase family. It depends on FAD as a cofactor. In terms of tissue distribution, expressed in the shoot and root apical regions of young seedlings. Expressed in inflorescences.

In terms of biological role, probable histone demethylase that reduces the levels of histone H3 'Lys-4' methylation in chromatin of the floral repressor FLOWERING LOCUS C (FLC) and the sporophytically silenced floral repressor FWA. Seems to act in partial redundancy with FLOWERING LOCUS D (FLD) to repress FLC expression. Required for cytosine methylation of FWA. Controls primary seed dormancy by regulating DOG1 and abscisic acid signaling-related genes. The chain is Lysine-specific histone demethylase 1 homolog 2 from Arabidopsis thaliana (Mouse-ear cress).